The chain runs to 415 residues: Probable G-protein coupled receptor 19 (415 aa).

At 1-69 the chain is on the extracellular side; the sequence is MVFAHRMDND…LNPGEVATAS (69 aa). N-linked (GlcNAc...) asparagine glycans are attached at residues asparagine 25 and asparagine 52. A helical membrane pass occupies residues 70 to 90; that stretch reads IFFGALWLFSIFGNSLVCLVI. Over 91–102 the chain is Cytoplasmic; it reads HRSRRTQSTTNY. Residues 103-123 traverse the membrane as a helical segment; the sequence is FVVSMACADLLISVASTPFVV. At 124–152 the chain is on the extracellular side; the sequence is LQFTTGRWTLGSAMCKVVRYFQYLTPGVQ. Cysteine 138 and cysteine 210 are disulfide-bonded. Residues 153 to 173 form a helical membrane-spanning segment; that stretch reads IYVLLSICIDRFYTIVYPLSF. The Cytoplasmic portion of the chain corresponds to 174–182; sequence KVSREKAKK. The helical transmembrane segment at 183 to 203 threads the bilayer; the sequence is MIAASWILDAAFVTPVFFFYG. Over 204-221 the chain is Extracellular; that stretch reads SNWDSHCNYFLPPSWEGT. A helical transmembrane segment spans residues 222–242; sequence AYTVIHFLVGFVIPSILIILF. Topologically, residues 243 to 277 are cytoplasmic; it reads YQKVIKYIWRIGTDGRTLRRTMNIVPRTKVKTVKM. A helical membrane pass occupies residues 278 to 298; that stretch reads FLLLNLVFLFSWLPFHVAQLW. At 299-309 the chain is on the extracellular side; sequence HPHEQDYKKSS. Residues 310-332 form a helical membrane-spanning segment; the sequence is LVFTAVTWVSFSSSASKPTLYSI. Residues 333–415 are Cytoplasmic-facing; sequence YNANFRRGMK…INSNPPNTFV (83 aa).

The protein belongs to the G-protein coupled receptor 1 family. In terms of tissue distribution, strongly expressed in the brain.

It localises to the cell membrane. In terms of biological role, G-protein coupled receptor that plays a role in the regulation of circadian rhythms and energy metabolism. Participates in maintaining proper circadian gene expression in the suprachiasmatic nucleus (SCN), the locus of the master circadian clock in the brain. May function as a coordinator of aging-associated metabolic dysfunction, stress response, DNA integrity management, and eventual senescence. Upon binding to adropin, modulates mitochondrial energy metabolism via the p44/42-PDK4 signaling pathway, influencing pyruvate dehydrogenase activity. This is Probable G-protein coupled receptor 19 (Gpr19) from Mus musculus (Mouse).